Here is a 301-residue protein sequence, read N- to C-terminus: GTPase IMAP family member 3 (301 aa).

The Cytoplasmic segment spans residues 1 to 279 (METLQNVVTG…GKKLEVLHSD (279 aa)). In terms of domain architecture, AIG1-type G spans 20–223 (SRPLRILLVG…HSNDLFLHAE (204 aa)). GTP is bound by residues 29–37 (GKSGCGKSA), serine 50, 147–149 (RKE), and asparagine 184. The segment at 263 to 301 (VLKVLPIGKKLEVLHSDFCWYLVLAILIFFVFFFLLFYV) is required for targeting to the endoplasmic reticulum. A helical; Anchor for type IV membrane protein membrane pass occupies residues 280–300 (FCWYLVLAILIFFVFFFLLFY). A topological domain (lumenal) is located at residue valine 301.

Belongs to the TRAFAC class TrmE-Era-EngA-EngB-Septin-like GTPase superfamily. AIG1/Toc34/Toc159-like paraseptin GTPase family. IAN subfamily. In terms of assembly, interacts with BAD, BAK1, BAX, BCL2, BCL2L1/Bcl-xL and BCL2L11/BimEL. The interaction with BAX is increased, when cells initiate apoptosis upon IL2 withdrawal. In terms of tissue distribution, expressed in thymus (in thymocytes), spleen (in splenocytes), lymph node and, at lower levels, in lung. Highly expressed in T lymphocytes.

The protein resides in the endoplasmic reticulum membrane. In terms of biological role, during thymocyte development, may support the positive selection of CD4 and CD8 T cells. May play a role in mitochondrial DNA segregation in hematopoietic tissues. Binds GTP. This is GTPase IMAP family member 3 (Gimap3) from Mus musculus (Mouse).